The primary structure comprises 220 residues: Deoxyribose-phosphate aldolase 1 (220 aa).

The Proton donor/acceptor role is filled by Asp89. Lys151 acts as the Schiff-base intermediate with acetaldehyde in catalysis. Lys180 functions as the Proton donor/acceptor in the catalytic mechanism.

Belongs to the DeoC/FbaB aldolase family. DeoC type 1 subfamily.

Its subcellular location is the cytoplasm. The catalysed reaction is 2-deoxy-D-ribose 5-phosphate = D-glyceraldehyde 3-phosphate + acetaldehyde. Its pathway is carbohydrate degradation; 2-deoxy-D-ribose 1-phosphate degradation; D-glyceraldehyde 3-phosphate and acetaldehyde from 2-deoxy-alpha-D-ribose 1-phosphate: step 2/2. Its function is as follows. Catalyzes a reversible aldol reaction between acetaldehyde and D-glyceraldehyde 3-phosphate to generate 2-deoxy-D-ribose 5-phosphate. This Staphylococcus aureus (strain MRSA252) protein is Deoxyribose-phosphate aldolase 1.